Here is a 292-residue protein sequence, read N- to C-terminus: MNNLVCPAIAFPSFLDPVIIQLGPITLHWYGLGYVVGILFAWWYAQKLLKKPSLWHKNHPPMTKEKIGDFVVWSAISVVVGGRLGQVLVWDPLYYFSHPSSIIAVWDGGMSFHGGLIGIIIAMILFARKNNINIRSMFDIIAAGAPIGIGIVRICNFINQELWGNATTQPWAVCFPLDPYYLPRHPSQLYEAFMEGFILFMILFIVIFTFKAFKRRGTVSGIFIIGYAIARSISEVYRAPQEDPEWFSTLFHSTGFTYGMALSLPMLLLGFYLLLQAFKDKSTENDTPQRKN.

Transmembrane regions (helical) follow at residues 25-45 (ITLHWYGLGYVVGILFAWWYA), 70-90 (FVVWSAISVVVGGRLGQVLVW), 102-122 (IIAVWDGGMSFHGGLIGIIIA), 138-158 (FDIIAAGAPIGIGIVRICNFI), 193-213 (FMEGFILFMILFIVIFTFKAF), 217-237 (GTVSGIFIIGYAIARSISEVY), and 255-275 (GFTYGMALSLPMLLLGFYLLL). Arginine 153 contacts a 1,2-diacyl-sn-glycero-3-phospho-(1'-sn-glycerol).

Belongs to the Lgt family.

Its subcellular location is the cell inner membrane. The catalysed reaction is L-cysteinyl-[prolipoprotein] + a 1,2-diacyl-sn-glycero-3-phospho-(1'-sn-glycerol) = an S-1,2-diacyl-sn-glyceryl-L-cysteinyl-[prolipoprotein] + sn-glycerol 1-phosphate + H(+). It participates in protein modification; lipoprotein biosynthesis (diacylglyceryl transfer). In terms of biological role, catalyzes the transfer of the diacylglyceryl group from phosphatidylglycerol to the sulfhydryl group of the N-terminal cysteine of a prolipoprotein, the first step in the formation of mature lipoproteins. This is Phosphatidylglycerol--prolipoprotein diacylglyceryl transferase from Bartonella tribocorum (strain CIP 105476 / IBS 506).